Here is a 146-residue protein sequence, read N- to C-terminus: MIRVRAVVYPGASFPEYQTLGSSGADLRAFLPGGPLEVHPLGRVLVPTGVCVELPVGLEMQIRPRSGLALEYGVTVLNSPGTIDADYRGEIRVLLVNLGLAAFVVSHGDRIAQAVISSVLRVEYVRSGSISLTERGKGGYGSTGVL.

Substrate is bound by residues 65–67 (RSG), Asn-78, and 82–84 (TID).

Belongs to the dUTPase family. Mg(2+) is required as a cofactor.

It carries out the reaction dUTP + H2O = dUMP + diphosphate + H(+). Its pathway is pyrimidine metabolism; dUMP biosynthesis; dUMP from dCTP (dUTP route): step 2/2. In terms of biological role, this enzyme is involved in nucleotide metabolism: it produces dUMP, the immediate precursor of thymidine nucleotides and it decreases the intracellular concentration of dUTP so that uracil cannot be incorporated into DNA. The sequence is that of Deoxyuridine 5'-triphosphate nucleotidohydrolase from Treponema pallidum subsp. pallidum (strain SS14).